The following is a 735-amino-acid chain: MIPNTPSITPELVAEHGLKPDEYQRFVELIGREPTITELGIVSAMWNEHCSYKSSKVWLRTLPTKGPRVIQGPGENAGVVDIGDGLAVVFKMESHNHPSFIEPYQGAGTGVGGILRDVFTMGARPIAALNALRFGDPHHPRTRRLLAGVVAGIGGYGNSFGVPTVGGSVGFHERYNGNILVNAMAVGLAKTDEIFYAAAAGVGRSIVYLGSKTGRDGIHGATMASAEFGADAEEKRPTVQVGDPFAEKLLLEACLEIMQAGCVVAIQDMGAAGLTCSAVEMGAKGDLGVELDLNAVPCRETGMTAYEMMLSESQERMLMVIADGKEDQAEAIFRKWGLDFAIIGKTTDTLRFVVKHDGDVKADLPIKELGDEAPEYYRPFTETPPRPVLGPSDVNHAVSVADALERLIASPDLCSKRWVWEQYDHLILGNTVQRPGGDAAVVRVNEGPKALALTTDVTPRYCEADPFEGGKQAVAEAWRNLTAVGATPIAVTDNLNFGNPEKPEIMGQFVGCVKGIGAACEALDFPVVSGNVSLYNETNGQGILPTPTIGGVGLIDDVEQSMTLAFKAAGEAIFVVGKTDGWLGSSAYLYTVCDREDGAPPPVDLVAEKRNGDFVRGLIKDDFITAAHDVSDGGLLVAIAEMAMAGRIGASVDGVPAGMPAHSFWFGEDQARYVVTLPANQAAEMVRRAEAAGVPVTKLGKTGGDKITLANERPIFVEGLRDRHDSWLPIYMGAN.

Residue histidine 49 is part of the active site. 2 residues coordinate ATP: tyrosine 52 and lysine 91. Glutamate 93 is a Mg(2+) binding site. Substrate-binding positions include serine 94–histidine 97 and arginine 116. The active-site Proton acceptor is the histidine 95. Residue aspartate 117 participates in Mg(2+) binding. A substrate-binding site is contributed by glutamine 240. Residue aspartate 268 coordinates Mg(2+). Position 312–314 (glutamate 312–glutamine 314) interacts with substrate. The ATP site is built by aspartate 493 and glycine 530. Asparagine 531 provides a ligand contact to Mg(2+). Serine 533 is a binding site for substrate.

The protein belongs to the FGAMS family. As to quaternary structure, monomer. Part of the FGAM synthase complex composed of 1 PurL, 1 PurQ and 2 PurS subunits.

It localises to the cytoplasm. The enzyme catalyses N(2)-formyl-N(1)-(5-phospho-beta-D-ribosyl)glycinamide + L-glutamine + ATP + H2O = 2-formamido-N(1)-(5-O-phospho-beta-D-ribosyl)acetamidine + L-glutamate + ADP + phosphate + H(+). Its pathway is purine metabolism; IMP biosynthesis via de novo pathway; 5-amino-1-(5-phospho-D-ribosyl)imidazole from N(2)-formyl-N(1)-(5-phospho-D-ribosyl)glycinamide: step 1/2. In terms of biological role, part of the phosphoribosylformylglycinamidine synthase complex involved in the purines biosynthetic pathway. Catalyzes the ATP-dependent conversion of formylglycinamide ribonucleotide (FGAR) and glutamine to yield formylglycinamidine ribonucleotide (FGAM) and glutamate. The FGAM synthase complex is composed of three subunits. PurQ produces an ammonia molecule by converting glutamine to glutamate. PurL transfers the ammonia molecule to FGAR to form FGAM in an ATP-dependent manner. PurS interacts with PurQ and PurL and is thought to assist in the transfer of the ammonia molecule from PurQ to PurL. This chain is Phosphoribosylformylglycinamidine synthase subunit PurL, found in Azorhizobium caulinodans (strain ATCC 43989 / DSM 5975 / JCM 20966 / LMG 6465 / NBRC 14845 / NCIMB 13405 / ORS 571).